The following is a 408-amino-acid chain: Multidrug resistance protein MdtG (408 aa).

10 helical membrane passes run 13–33 (LYIAWLGCFFTGAAFSLVMPF), 51–71 (LWSGVVFSITFLFSAIASPFW), 89–109 (LGMAIVMALMGLVQNIWQFLL), 112–132 (AALGVLGGFVPNANALIAIQV), 138–158 (GWALGTLSTGAVGGALLGPLL), 170–190 (PVFFITAVVLFICFLVTFFFI), 221–241 (LFVTTLIIQVATGSVAPILTL), 253–273 (LAFISGAIAAIPGVSALLSAP), 287–307 (ILVAMLILSVLLLIPMAFVQS), and 375–395 (AVFLVTASVVMINAFYSWLSL).

This sequence belongs to the major facilitator superfamily. DHA1 family. MdtG (TC 2.A.1.2.20) subfamily.

Its subcellular location is the cell inner membrane. This chain is Multidrug resistance protein MdtG, found in Dickeya zeae (strain Ech586) (Dickeya dadantii (strain Ech586)).